The chain runs to 175 residues: MTSLLITGYKAFEIGISTEKDMRIKIIKEAAKRDLIRFLEDGVDWLVFMGNLGFESWVLDLANELKKDYEFQTATIFLFENQGENWNEANQAKLAAFKQADFVKYAYPTYQNPSQFRDYNQFVIQNTDGAYLFYDEEQETKLKYLYQEMKKQEQYFIKKLTFDDLNEVAENFSGN.

This sequence belongs to the UPF0398 family.

The chain is UPF0398 protein SSA_1858 from Streptococcus sanguinis (strain SK36).